The sequence spans 435 residues: Tryptophan synthase beta chain (435 aa).

At Lys-92 the chain carries N6-(pyridoxal phosphate)lysine.

The protein belongs to the TrpB family. As to quaternary structure, tetramer of two alpha and two beta chains. It depends on pyridoxal 5'-phosphate as a cofactor.

The enzyme catalyses (1S,2R)-1-C-(indol-3-yl)glycerol 3-phosphate + L-serine = D-glyceraldehyde 3-phosphate + L-tryptophan + H2O. It functions in the pathway amino-acid biosynthesis; L-tryptophan biosynthesis; L-tryptophan from chorismate: step 5/5. The beta subunit is responsible for the synthesis of L-tryptophan from indole and L-serine. The polypeptide is Tryptophan synthase beta chain (Albidiferax ferrireducens (strain ATCC BAA-621 / DSM 15236 / T118) (Rhodoferax ferrireducens)).